The primary structure comprises 372 residues: Glutamate 5-kinase (372 aa).

An ATP-binding site is contributed by lysine 14. Residues serine 54, aspartate 141, and asparagine 153 each contribute to the substrate site. 173-174 (TD) provides a ligand contact to ATP. One can recognise a PUA domain in the interval 280–358 (RGNVTLDEGA…DEIESLLGYI (79 aa)).

Belongs to the glutamate 5-kinase family.

It localises to the cytoplasm. It carries out the reaction L-glutamate + ATP = L-glutamyl 5-phosphate + ADP. The protein operates within amino-acid biosynthesis; L-proline biosynthesis; L-glutamate 5-semialdehyde from L-glutamate: step 1/2. Its function is as follows. Catalyzes the transfer of a phosphate group to glutamate to form L-glutamate 5-phosphate. This is Glutamate 5-kinase from Nitrosospira multiformis (strain ATCC 25196 / NCIMB 11849 / C 71).